Reading from the N-terminus, the 370-residue chain is Erythronate-4-phosphate dehydrogenase (370 aa).

Substrate contacts are provided by Ser-45 and Thr-66. Residues Asp-142 and Thr-169 each contribute to the NAD(+) site. The active site involves Arg-202. Asp-228 contacts NAD(+). The active site involves Glu-233. His-250 functions as the Proton donor in the catalytic mechanism. NAD(+) is bound at residue Gly-253. Tyr-254 provides a ligand contact to substrate.

Belongs to the D-isomer specific 2-hydroxyacid dehydrogenase family. PdxB subfamily. In terms of assembly, homodimer.

It is found in the cytoplasm. It carries out the reaction 4-phospho-D-erythronate + NAD(+) = (R)-3-hydroxy-2-oxo-4-phosphooxybutanoate + NADH + H(+). Its pathway is cofactor biosynthesis; pyridoxine 5'-phosphate biosynthesis; pyridoxine 5'-phosphate from D-erythrose 4-phosphate: step 2/5. Functionally, catalyzes the oxidation of erythronate-4-phosphate to 3-hydroxy-2-oxo-4-phosphonooxybutanoate. In Teredinibacter turnerae (strain ATCC 39867 / T7901), this protein is Erythronate-4-phosphate dehydrogenase.